Here is a 230-residue protein sequence, read N- to C-terminus: Ion-translocating oxidoreductase complex subunit E (230 aa).

6 helical membrane-spanning segments follow: residues 18–38, 39–59, 63–83, 86–106, 125–145, and 182–202; these read ALVQ…ATNA, LGLG…VSAL, TPAE…VSAV, LINA…PLIV, WLSA…MFVL, and PFLL…MLAV.

The protein belongs to the NqrDE/RnfAE family. As to quaternary structure, the complex is composed of six subunits: RsxA, RsxB, RsxC, RsxD, RsxE and RsxG.

The protein resides in the cell inner membrane. Its function is as follows. Part of a membrane-bound complex that couples electron transfer with translocation of ions across the membrane. Required to maintain the reduced state of SoxR. This is Ion-translocating oxidoreductase complex subunit E from Salmonella agona (strain SL483).